The sequence spans 394 residues: NAD(P)H-quinone oxidoreductase subunit H (394 aa).

Belongs to the complex I 49 kDa subunit family. As to quaternary structure, NDH-1 can be composed of about 15 different subunits; different subcomplexes with different compositions have been identified which probably have different functions.

The protein resides in the cellular thylakoid membrane. It catalyses the reaction a plastoquinone + NADH + (n+1) H(+)(in) = a plastoquinol + NAD(+) + n H(+)(out). The catalysed reaction is a plastoquinone + NADPH + (n+1) H(+)(in) = a plastoquinol + NADP(+) + n H(+)(out). NDH-1 shuttles electrons from an unknown electron donor, via FMN and iron-sulfur (Fe-S) centers, to quinones in the respiratory and/or the photosynthetic chain. The immediate electron acceptor for the enzyme in this species is believed to be plastoquinone. Couples the redox reaction to proton translocation, and thus conserves the redox energy in a proton gradient. Cyanobacterial NDH-1 also plays a role in inorganic carbon-concentration. The sequence is that of NAD(P)H-quinone oxidoreductase subunit H from Thermosynechococcus vestitus (strain NIES-2133 / IAM M-273 / BP-1).